The chain runs to 312 residues: Phosphate system positive regulatory protein PHO4 (312 aa).

The segment at 1–31 is interaction with PHO80; sequence MGRTTSEGIHGFVDDLEPKSSILDKVGDFIT. The disordered stretch occupies residues 35 to 71; it reads KRHDGREDFNEQNDELNSQENHNSSENGNENENEQDS. The segment covering 49 to 62 has biased composition (low complexity); the sequence is ELNSQENHNSSENG. A 9aaTAD motif is present at residues 75–83; that stretch reads DDLDRAFEL. The tract at residues 75–99 is transcription activation domain; it reads DDLDRAFELVEGMDMDWMMPSHAHH. Phosphoserine; by PHO85 occurs at positions 100, 114, 128, and 152. Composition is skewed to polar residues over residues 138 to 154 and 196 to 210; these read TTSA…SSPY and PSNS…TAKT. Residues 138–259 are disordered; the sequence is TTSANKVTKN…DKRESHKHAE (122 aa). Residues 140 to 166 carry the Nuclear localization signal motif; sequence SANKVTKNKSNSSPYLNKRRGKPGPDS. The interaction with PHO80 stretch occupies residues 156 to 200; sequence NKRRGKPGPDSATSLFELPDSVIPTPKPKPKPKQYPKVILPSNST. The interval 201 to 218 is interaction with PHO2; it reads RRVSPVTAKTSSSAEGVV. Residues 203 to 227 form an involved in oligomerization region; it reads VSPVTAKTSSSAEGVVVASESPVIA. At serine 204 the chain carries Phosphoserine. Residues 211–235 are compositionally biased toward low complexity; it reads SSSAEGVVVASESPVIAPHGSSHSR. Serine 223 bears the Phosphoserine; by PHO85 mark. Serine 242 and serine 243 each carry phosphoserine. A compositionally biased stretch (basic and acidic residues) spans 248-259; it reads DDDKRESHKHAE. One can recognise a bHLH domain in the interval 250–306; it reads DKRESHKHAEQARRNRLAVALHELASLIPAEWKQQNVSAAPSKATTVEAACRYIRHL.

As to quaternary structure, binds DNA as a homodimer. Interacts with transcription factor PHO2 and binds cooperatively to PHO5 UAS. Interacts with the cyclin-CDK PHO80-PHO85 and the CDK inhibitor (CKI) PHO81. Phosphorylated by the cyclin-CDK PHO80-PHO85 at five residues under high-phosphate conditions, preventing PHO4 from activating the structural PHO genes. Phosphorylation of Ser-114 and Ser-128 promotes nuclear export. Phosphorylation of Ser-152 decreases nuclear import. Phosphorylation of Ser-223 decreases the binding affinity for PHO2.

The protein localises to the cytoplasm. Its subcellular location is the nucleus. In terms of biological role, transcriptional activator that regulates the expression of repressible phosphatase under phosphate starvation conditions. Binds to the upstream activating sequence (UAS) of several phosphatase encoding PHO genes. Inhibited by the cyclin-CDK PHO80-PHO85 under high-phosphate conditions. The polypeptide is Phosphate system positive regulatory protein PHO4 (PHO4) (Saccharomyces cerevisiae (strain ATCC 204508 / S288c) (Baker's yeast)).